The following is a 488-amino-acid chain: Fumarate hydratase (488 aa).

(S)-malate is bound by residues S105, S147, N148, T194, and H195. H195 (proton donor/acceptor) is an active-site residue. The active site involves S340. (S)-malate is bound by residues S341, K346, and N348.

This sequence belongs to the class-II fumarase/aspartase family. Fumarase subfamily. Homotetramer.

The protein localises to the cytoplasm. It localises to the cytosol. It carries out the reaction (S)-malate = fumarate + H2O. Catalyzes the reversible stereospecific interconversion of fumarate to L-malate. Fumarate metabolism in the cytosol plays a role during urea cycle and arginine metabolism; fumarate being a by-product of the urea cycle and amino-acid catabolism. This Schistosoma mansoni (Blood fluke) protein is Fumarate hydratase.